The chain runs to 710 residues: MQAKKPGGSSGGGRSGELQGDEAQRNKKKKKKVSCFSNIKIFLVSECALMLAQGTVGAYLVSVLTTLERRFNLQSADVGVIASSFEIGNLALILFVSYFGARGHRPRLIGCGGIVMALGALLSALPEFLTHQYKYEAGEIRWGAEGRDVCAANGSGGDQGPDPDLICRSRTATNMMYLLLIGAQVLLGIGATPVQPLGVSYIDDHVRRKDSSLYIGILFTMLVFGPACGFILGSFCTKIYVDAVFIDTSNLDITPDDPRWIGAWWGGFLLCGALLFFSSVLMFGFPQSLPPHSDPALESEQAMLPEREYERPKPSNGVLRHPLEPDSSASCFQQLRVIPKVTKHLLSNPVFTCIILAACMEIAVVAGFAAFLGKYLEQQFNLTTSSANQLLGMTAIPCACLGIFLGGLLVKKLSLSALGAIRMAMLVNLVSTACYVSFLFLGCDTGPVAGVTVPYGNSSTPGSALDPYSSCNKNCECQTDSFTPVCGADGITYLSACFAGCNSTNLTGCACLMTIPPENATVIPGKCPSPGCQEAFLTFLCVMCVCSMIGAMAQTPSVIILIRTVSPELKSYALGVLFLLLRLLGFIPPPLIFGAGIDSTCLFWSTFCGEQGACALYDNVAYRYLYVSIAIALKSFAFLLYTTTWQCLRKNYKRYIKNHEGGLSTSEFFASTLTLDNLGRDPVPANQTHRTKFIYNLEDHEWCENMESVL.

At Met1 the chain carries N-acetylmethionine. The segment at Met1–Arg25 is disordered. At Met1–Lys40 the chain is on the cytoplasmic side. A helical membrane pass occupies residues Ile41–Leu60. Topologically, residues Val61–Gly79 are extracellular. A helical transmembrane segment spans residues Val80–Gly100. Residues Ala101 to Pro106 lie on the Cytoplasmic side of the membrane. A helical membrane pass occupies residues Arg107–His131. At Gln132 to Asn174 the chain is on the extracellular side. Asn153 carries N-linked (GlcNAc...) asparagine glycosylation. A helical membrane pass occupies residues Met175–Asp203. The Cytoplasmic segment spans residues Asp204–Leu222. A helical membrane pass occupies residues Val223–Ala243. Over Val244–Ile261 the chain is Extracellular. A helical membrane pass occupies residues Gly262–Pro286. The Cytoplasmic segment spans residues Gln287–His344. Residues Leu345 to Ala366 traverse the membrane as a helical segment. Topologically, residues Gly367–Ser386 are extracellular. An N-linked (GlcNAc...) asparagine glycan is attached at Asn381. Residues Ala387–Val410 form a helical membrane-spanning segment. Over Lys411 to Ser414 the chain is Cytoplasmic. A helical membrane pass occupies residues Leu415–Phe438. The Extracellular segment spans residues Leu439 to Phe539. Asn457 carries an N-linked (GlcNAc...) asparagine glycan. One can recognise a Kazal-like domain in the interval Leu465 to Met513. 3 disulfide bridges follow: Cys471–Cys501, Cys477–Cys497, and Cys486–Cys511. N-linked (GlcNAc...) asparagine glycosylation is found at Asn502, Asn505, and Asn519. Residues Leu540–Ile562 traverse the membrane as a helical segment. The Cytoplasmic portion of the chain corresponds to Arg563–Ser571. A helical membrane pass occupies residues Tyr572–Ile597. The Extracellular segment spans residues Asp598–Ala630. Residues Ile631 to Leu648 form a helical membrane-spanning segment. Topologically, residues Arg649 to Asn705 are cytoplasmic.

It belongs to the organo anion transporter (TC 2.A.60) family.

Its subcellular location is the basolateral cell membrane. The protein resides in the apical cell membrane. It localises to the basal cell membrane. The enzyme catalyses L-thyroxine(out) = L-thyroxine(in). The catalysed reaction is prostaglandin E1(out) = prostaglandin E1(in). It catalyses the reaction prostaglandin E2(out) = prostaglandin E2(in). It carries out the reaction prostaglandin F2alpha(out) = prostaglandin F2alpha(in). The enzyme catalyses (5Z,8Z,11Z,14Z)-eicosatetraenoate(out) = (5Z,8Z,11Z,14Z)-eicosatetraenoate(in). The catalysed reaction is taurocholate(out) = taurocholate(in). It catalyses the reaction glycocholate(out) = glycocholate(in). It carries out the reaction estrone 3-sulfate(out) = estrone 3-sulfate(in). The enzyme catalyses argipressin(out) = argipressin(in). Functionally, putative organic anion antiporter with apparent broad substrate specificity. Recognizes various substrates including thyroid hormone L-thyroxine, prostanoids such as prostaglandin E1 and E2, bile acids such as taurocholate, glycolate and glycochenodeoxycholate and peptide hormones such as L-arginine vasopressin, likely operating in a tissue-specific manner. The transport mechanism, its electrogenicity and potential tissue-specific counterions remain to be elucidated. This chain is Solute carrier organic anion transporter family member 3A1 (SLCO3A1), found in Bos taurus (Bovine).